The following is a 283-amino-acid chain: Putative transposase InsK for insertion sequence element IS150 (283 aa).

The Integrase catalytic domain occupies 117–279 (KATRPNEKWV…TPIEYRNQTY (163 aa)).

It belongs to the transposase IS3/IS150/IS904 family.

In terms of biological role, involved in the transposition of the insertion sequence IS150. This is Putative transposase InsK for insertion sequence element IS150 (insK) from Escherichia coli (strain K12).